Consider the following 423-residue polypeptide: Serine hydroxymethyltransferase (423 aa).

Residues Leu120 and 124–126 contribute to the (6S)-5,6,7,8-tetrahydrofolate site; that span reads GHL. The residue at position 229 (Lys229) is an N6-(pyridoxal phosphate)lysine. (6S)-5,6,7,8-tetrahydrofolate is bound at residue 353 to 355; that stretch reads SPF.

Belongs to the SHMT family. Homodimer. Pyridoxal 5'-phosphate is required as a cofactor.

Its subcellular location is the cytoplasm. It carries out the reaction (6R)-5,10-methylene-5,6,7,8-tetrahydrofolate + glycine + H2O = (6S)-5,6,7,8-tetrahydrofolate + L-serine. It participates in one-carbon metabolism; tetrahydrofolate interconversion. The protein operates within amino-acid biosynthesis; glycine biosynthesis; glycine from L-serine: step 1/1. In terms of biological role, catalyzes the reversible interconversion of serine and glycine with tetrahydrofolate (THF) serving as the one-carbon carrier. This reaction serves as the major source of one-carbon groups required for the biosynthesis of purines, thymidylate, methionine, and other important biomolecules. Also exhibits THF-independent aldolase activity toward beta-hydroxyamino acids, producing glycine and aldehydes, via a retro-aldol mechanism. This chain is Serine hydroxymethyltransferase, found in Prochlorococcus marinus (strain AS9601).